The primary structure comprises 184 residues: mRNA transport regulator MTR2 (184 aa).

A disordered region spans residues 111–135; sequence KMGQDATVPIQPNNTGNRNRPNDMN. The segment covering 120–129 has biased composition (polar residues); the sequence is IQPNNTGNRN. T125 is modified (phosphothreonine).

Interacts with MEX67.

The protein resides in the nucleus. Affects mRNA transport from the nucleus to the cytoplasm. In Saccharomyces cerevisiae (strain ATCC 204508 / S288c) (Baker's yeast), this protein is mRNA transport regulator MTR2 (MTR2).